A 348-amino-acid polypeptide reads, in one-letter code: Dihydroorotase (348 aa).

Zn(2+)-binding residues include His17 and His19. Residues 19-21 (HLR) and Asn45 each bind substrate. Lys103, His140, and His178 together coordinate Zn(2+). The residue at position 103 (Lys103) is an N6-carboxylysine. Substrate is bound at residue His140. Leu223 lines the substrate pocket. Asp251 is a Zn(2+) binding site. Asp251 is a catalytic residue. 2 residues coordinate substrate: His255 and Ala267.

Belongs to the metallo-dependent hydrolases superfamily. DHOase family. Class II DHOase subfamily. In terms of assembly, homodimer. Requires Zn(2+) as cofactor.

It catalyses the reaction (S)-dihydroorotate + H2O = N-carbamoyl-L-aspartate + H(+). The protein operates within pyrimidine metabolism; UMP biosynthesis via de novo pathway; (S)-dihydroorotate from bicarbonate: step 3/3. Functionally, catalyzes the reversible cyclization of carbamoyl aspartate to dihydroorotate. In Salmonella agona (strain SL483), this protein is Dihydroorotase.